Consider the following 828-residue polypeptide: Fibroblast growth factor receptor 4 (828 aa).

The N-terminal stretch at 1–31 is a signal peptide; that stretch reads MSGSIRRSYTAMQNFPRFLLGVLFVATLSSC. Over 32 to 392 the chain is Extracellular; it reads RPRLSEDEAN…AEPAESRYMD (361 aa). In terms of domain architecture, Ig-like C2-type 1 spans 33 to 127; that stretch reads PRLSEDEANW…GKILRRFSIS (95 aa). A disulfide bridge connects residues C67 and C112. N-linked (GlcNAc...) asparagine glycosylation occurs at N70. The interval 132 to 156 is disordered; the sequence is LASGDEEEEEEDDDDEDGRREDTTA. Residues 135-147 show a composition bias toward acidic residues; it reads GDEEEEEEDDDDE. Ig-like C2-type domains are found at residues 169–259 and 272–372; these read PYWT…LTYT and PILQ…AWLT. C194 and C247 are joined by a disulfide. N244, N281, N313, and N345 each carry an N-linked (GlcNAc...) asparagine glycan. A disulfide bridge links C294 with C356. A helical membrane pass occupies residues 393–413; the sequence is IIIYTSGFLAVAMAIMIVILC. Residues 414-828 are Cytoplasmic-facing; the sequence is RMQTPHSKQT…YHNIHSQLGT (415 aa). Positions 490-777 constitute a Protein kinase domain; that stretch reads LVLGKPLGEG…ILTAVSEEYL (288 aa). ATP contacts are provided by residues 496–504 and K526; that span reads LGEGCFGQV. The active-site Proton acceptor is the D635. A phosphotyrosine; by autocatalysis mark is found at Y665, Y666, and Y776.

This sequence belongs to the protein kinase superfamily. Tyr protein kinase family. Fibroblast growth factor receptor subfamily. Post-translationally, ubiquitinated. Subject to proteasomal degradation when not fully glycosylated. Autophosphorylated. Binding of FGF family members together with heparan sulfate proteoglycan or heparin promotes receptor dimerization and autophosphorylation on tyrosine residues. Autophosphorylation occurs in trans between the two FGFR molecules present in the dimer.

Its subcellular location is the cell membrane. It localises to the endosome. The protein localises to the endoplasmic reticulum. It catalyses the reaction L-tyrosyl-[protein] + ATP = O-phospho-L-tyrosyl-[protein] + ADP + H(+). Present in an inactive conformation in the absence of bound ligand. Ligand binding leads to dimerization and activation by autophosphorylation on tyrosine residues. Its function is as follows. Tyrosine-protein kinase that acts as a cell-surface receptor for fibroblast growth factors and plays a role in the regulation of cell proliferation, differentiation and migration, and in regulation of lipid metabolism, bile acid biosynthesis, glucose uptake, vitamin D metabolism and phosphate homeostasis. Required for normal down-regulation of the expression of CYP7A1, the rate-limiting enzyme in bile acid synthesis, in response to FGF19. Phosphorylates PLCG1 and FRS2. Ligand binding leads to the activation of several signaling cascades. Activation of PLCG1 leads to the production of the cellular signaling molecules diacylglycerol and inositol 1,4,5-trisphosphate. Phosphorylation of FRS2 triggers recruitment of GRB2, GAB1, PIK3R1 and SOS1, and mediates activation of RAS, MAPK1/ERK2, MAPK3/ERK1 and the MAP kinase signaling pathway, as well as of the AKT1 signaling pathway. This Xenopus laevis (African clawed frog) protein is Fibroblast growth factor receptor 4 (fgfr4).